A 423-amino-acid polypeptide reads, in one-letter code: Deoxyguanosinetriphosphate triphosphohydrolase-like protein (423 aa).

Positions 66-216 (RLTHSLEVAQ…MDFSDDIAYS (151 aa)) constitute an HD domain.

Belongs to the dGTPase family. Type 2 subfamily.

The polypeptide is Deoxyguanosinetriphosphate triphosphohydrolase-like protein (Corynebacterium diphtheriae (strain ATCC 700971 / NCTC 13129 / Biotype gravis)).